Here is a 643-residue protein sequence, read N- to C-terminus: Extracellular metalloproteinase 4 (643 aa).

Residues 1-18 form the signal peptide; it reads MHGLMLAGLLALPLSVLG. A propeptide spanning residues 19–254 is cleaved from the precursor; it reads HPTESHSSGI…VHSVVDYVSA (236 aa). Residues 47 to 57 are compositionally biased toward basic and acidic residues; that stretch reads TKSDAVPKQDG. Positions 47-73 are disordered; that stretch reads TKSDAVPKQDGESFTTSSTGNDNSSSG. Low complexity predominate over residues 61 to 73; the sequence is TTSSTGNDNSSSG. N-linked (GlcNAc...) asparagine glycans are attached at residues N271 and N420. H437 contributes to the Zn(2+) binding site. E438 is a catalytic residue. H441 is a Zn(2+) binding site. N-linked (GlcNAc...) asparagine glycans are attached at residues N603 and N629.

This sequence belongs to the peptidase M36 family. The cofactor is Zn(2+).

The protein localises to the secreted. Its function is as follows. Secreted metalloproteinase probably acting as a virulence factor. The chain is Extracellular metalloproteinase 4 (MEP4) from Trichophyton rubrum (Athlete's foot fungus).